A 286-amino-acid polypeptide reads, in one-letter code: Short-chain dehydrogenase fogD (286 aa).

7 residues coordinate NADP(+): valine 8, threonine 34, aspartate 55, tyrosine 147, lysine 151, valine 180, and threonine 182. Tyrosine 147 (proton acceptor) is an active-site residue. Lysine 151 (lowers pKa of active site Tyr) is an active-site residue.

Belongs to the short-chain dehydrogenases/reductases (SDR) family.

It functions in the pathway secondary metabolite biosynthesis. Functionally, short-chain dehydrogenase; part of the gene cluster that mediates the biosynthesis of flavoglaucin and congeners (including aspergin, dihydroauroglaucin and auroglaucin), prenylated salicylaldehyde derivatives carrying a saturated or an unsaturated C-7 side chain. The PKS fogA releases the carboxylic acid (8E,10E,12E)-3,5,7-trihydroxytetradeca-8,10,12-trienoic acid as its product, as well as derivatives with one and two double bonds. FogA is indeed able to reduce the initial triketide, thus being at least partially responsible for the differently saturated heptyl side chains of flavoglaucin congeners. The oxidoreductases fogB, fogC and fogD modify the nascent polyketide in fogA-bound form and, together, fogA, fogB, fogC and fogD are necessary for the formation of the aromatic core and the cyclized PKS products are released as salicyl alcohols. In particular, fogB is responsible for oxidation of a hydroxyl group or reduction of remaining double bond(s) at the C-7 residue whereas fogD is probably involved in the reductive release of the modified PKS products. The cytochrome P450 monooxygenase fogE is then responsible for the hydroxylation at C-3 of the benzene ring. The fogE products are substrates of the prenyltransferase fogH and the prenylated benzyl alcohols are subsequently oxidized by the fogF to produce the final aryl aldehydes flavoglaucin and congeners. The short-chain dehydrogenase fogG does not seem to be involved in the biosynthesis of the prenylated salicylaldehyde derivatives. The sequence is that of Short-chain dehydrogenase fogD from Aspergillus ruber (strain CBS 135680).